Reading from the N-terminus, the 94-residue chain is Protein translocase subunit SecE (94 aa).

Positions 1–32 are disordered; the sequence is MTDAVGSIDTPDAQDEVPESKKTRKGGKRAKK. Basic residues predominate over residues 22-32; sequence KTRKGGKRAKK. A helical transmembrane segment spans residues 59-81; it reads QLTSYTTVVIFFVAIMIRLVTVI.

The protein belongs to the SecE/SEC61-gamma family. Component of the Sec protein translocase complex. Heterotrimer consisting of SecY, SecE and SecG subunits. The heterotrimers can form oligomers, although 1 heterotrimer is thought to be able to translocate proteins. Interacts with the ribosome. Interacts with SecDF, and other proteins may be involved. Interacts with SecA.

It localises to the cell membrane. Functionally, essential subunit of the Sec protein translocation channel SecYEG. Clamps together the 2 halves of SecY. May contact the channel plug during translocation. This chain is Protein translocase subunit SecE, found in Streptomyces galbus.